Here is a 607-residue protein sequence, read N- to C-terminus: UPF0329 protein ECU06_1610 (607 aa).

2 disordered regions span residues 312–410 (VHEV…RSKG) and 531–570 (TSSE…PPGV). Residues 313–347 (HEVKERESEEKRREEESLRNAEELLRMEEREKGEG) are compositionally biased toward basic and acidic residues. The span at 353 to 364 (KGKKKRGKKGAG) shows a compositional bias: basic residues. The span at 365-374 (KAKEESKEED) shows a compositional bias: basic and acidic residues. A compositionally biased stretch (acidic residues) spans 375–393 (RGEEEEESVEAEVPVEEMA). Polar residues predominate over residues 531–543 (TSSEKTGKGSSPS). Residues 549 to 558 (DVDEIEEDGS) are compositionally biased toward acidic residues.

It belongs to the UPF0329 family.

This is UPF0329 protein ECU06_1610 from Encephalitozoon cuniculi (strain GB-M1) (Microsporidian parasite).